Here is an 869-residue protein sequence, read N- to C-terminus: Alanine--tRNA ligase (869 aa).

Residues H559, H563, C660, and H664 each contribute to the Zn(2+) site.

Belongs to the class-II aminoacyl-tRNA synthetase family. It depends on Zn(2+) as a cofactor.

The protein resides in the cytoplasm. The catalysed reaction is tRNA(Ala) + L-alanine + ATP = L-alanyl-tRNA(Ala) + AMP + diphosphate. Catalyzes the attachment of alanine to tRNA(Ala) in a two-step reaction: alanine is first activated by ATP to form Ala-AMP and then transferred to the acceptor end of tRNA(Ala). Also edits incorrectly charged Ser-tRNA(Ala) and Gly-tRNA(Ala) via its editing domain. This is Alanine--tRNA ligase from Janthinobacterium sp. (strain Marseille) (Minibacterium massiliensis).